A 551-amino-acid chain; its full sequence is E-selectin (551 aa).

An N-terminal signal peptide occupies residues 1–23 (MVASWLLSTLTFALVLLIKETST). The region spanning 24–141 (WTYHFSAENM…CSKKKLALCY (118 aa)) is the C-type lectin domain. Topologically, residues 24–495 (WTYHFSAENM…CEEPIASNVP (472 aa)) are extracellular. N-linked (GlcNAc...) asparagine glycans are attached at residues Asn32 and Asn45. Cystine bridges form between Cys42/Cys140, Cys113/Cys132, Cys145/Cys156, Cys150/Cys165, Cys167/Cys176, Cys182/Cys226, Cys195/Cys208, Cys212/Cys239, Cys244/Cys288, Cys257/Cys270, Cys274/Cys301, Cys306/Cys351, Cys337/Cys364, Cys369/Cys414, Cys400/Cys427, Cys432/Cys473, and Cys459/Cys486. Positions 103, 105, and 111 each coordinate Ca(2+). A carbohydrate contacts are provided by residues 103 to 111 (EPNNKQNNE), 115 to 120 (EIYIKR), and 128 to 130 (NDE). Positions 128 and 129 each coordinate Ca(2+). The region spanning 142 to 177 (TAACTEASCSGHGECIETINNYSCKCYPGFSGLKCE) is the EGF-like domain. An N-linked (GlcNAc...) asparagine glycan is attached at Asn162. Sushi domains are found at residues 180–241 (VTCE…TCKV), 242–303 (VECD…TCKA), 305–366 (SCDT…VCEA), 368–429 (KCDP…SCQV), and 430–488 (VQCP…TCEE). Residues Asn194, Asn201, and Asn205 are each glycosylated (N-linked (GlcNAc...) asparagine). Asn267 carries an N-linked (GlcNAc...) asparagine glycan. Asn314, Asn321, and Asn334 each carry an N-linked (GlcNAc...) asparagine glycan. 2 N-linked (GlcNAc...) asparagine glycosylation sites follow: Asn442 and Asn466. The chain crosses the membrane as a helical span at residues 496-517 (LAVGLSVSGTSFLTLTSFLLWF). Over 518–551 (LKYFRKKAKKFVPASSRYVGLEAHGNCQVPSHLI) the chain is Cytoplasmic.

It belongs to the selectin/LECAM family. Interacts with SELPLG/PSGL1 and PODXL2 through the sialyl Lewis X epitope. SELPLG sulfation appears not to be required for this interaction.

It is found in the cell membrane. Cell-surface glycoprotein having a role in immunoadhesion. Mediates in the adhesion of blood neutrophils in cytokine-activated endothelium through interaction with SELPLG/PSGL1. May have a role in capillary morphogenesis. The polypeptide is E-selectin (SELE) (Oryctolagus cuniculus (Rabbit)).